Here is a 400-residue protein sequence, read N- to C-terminus: Nicotinate phosphoribosyltransferase (400 aa).

Histidine 220 is subject to Phosphohistidine; by autocatalysis.

This sequence belongs to the NAPRTase family. In terms of processing, transiently phosphorylated on a His residue during the reaction cycle. Phosphorylation strongly increases the affinity for substrates and increases the rate of nicotinate D-ribonucleotide production. Dephosphorylation regenerates the low-affinity form of the enzyme, leading to product release.

It carries out the reaction nicotinate + 5-phospho-alpha-D-ribose 1-diphosphate + ATP + H2O = nicotinate beta-D-ribonucleotide + ADP + phosphate + diphosphate. Its pathway is cofactor biosynthesis; NAD(+) biosynthesis; nicotinate D-ribonucleotide from nicotinate: step 1/1. Catalyzes the synthesis of beta-nicotinate D-ribonucleotide from nicotinate and 5-phospho-D-ribose 1-phosphate at the expense of ATP. This Cronobacter sakazakii (strain ATCC BAA-894) (Enterobacter sakazakii) protein is Nicotinate phosphoribosyltransferase.